The chain runs to 443 residues: Chorionicgonadotropic hormone-like protein (443 aa).

Residues 263–286 (RCAGRPCPRRHRRPCNASKSHRPM) are compositionally biased toward basic residues. Residues 263–292 (RCAGRPCPRRHRRPCNASKSHRPMRMQQRD) are disordered.

This sequence to mammalian CGHB.

The protein resides in the secreted. Its subcellular location is the cell wall. Functionally, cell wall protein that resembles the beta subunit of human chorionic gonadotropin. Stimulates growth and change in morphology. The sequence is that of Chorionicgonadotropic hormone-like protein (xcg) from Stenotrophomonas maltophilia (Pseudomonas maltophilia).